Consider the following 545-residue polypeptide: Glucose-6-phosphate isomerase (545 aa).

E351 functions as the Proton donor in the catalytic mechanism. Catalysis depends on residues H382 and K510.

This sequence belongs to the GPI family.

The protein localises to the cytoplasm. It catalyses the reaction alpha-D-glucose 6-phosphate = beta-D-fructose 6-phosphate. It functions in the pathway carbohydrate biosynthesis; gluconeogenesis. Its pathway is carbohydrate degradation; glycolysis; D-glyceraldehyde 3-phosphate and glycerone phosphate from D-glucose: step 2/4. In terms of biological role, catalyzes the reversible isomerization of glucose-6-phosphate to fructose-6-phosphate. This is Glucose-6-phosphate isomerase from Helicobacter pylori (strain HPAG1).